The chain runs to 78 residues: MSRVCELTGAKANNGMAVSHSHIRTKKLQQVNLQKRRLWWEEGKKWVNIKISTKALKSIQKVGLDKFAKSNGVDLNKF.

The protein belongs to the bacterial ribosomal protein bL28 family.

The sequence is that of Large ribosomal subunit protein bL28 from Prochlorococcus marinus (strain MIT 9301).